A 497-amino-acid chain; its full sequence is Glycerol kinase (497 aa).

Thr-12 is an ADP binding site. Thr-12, Thr-13, and Ser-14 together coordinate ATP. Thr-12 contacts sn-glycerol 3-phosphate. Arg-16 contacts ADP. Residues Arg-82, Glu-83, Tyr-134, and Asp-243 each contribute to the sn-glycerol 3-phosphate site. Glycerol-binding residues include Arg-82, Glu-83, Tyr-134, Asp-243, and Gln-244. 2 residues coordinate ADP: Thr-265 and Gly-308. ATP contacts are provided by Thr-265, Gly-308, Gln-312, and Gly-411. Residue Gly-411 participates in ADP binding.

The protein belongs to the FGGY kinase family.

It carries out the reaction glycerol + ATP = sn-glycerol 3-phosphate + ADP + H(+). It participates in polyol metabolism; glycerol degradation via glycerol kinase pathway; sn-glycerol 3-phosphate from glycerol: step 1/1. Its activity is regulated as follows. Inhibited by fructose 1,6-bisphosphate (FBP). In terms of biological role, key enzyme in the regulation of glycerol uptake and metabolism. Catalyzes the phosphorylation of glycerol to yield sn-glycerol 3-phosphate. In Rhizobium meliloti (strain 1021) (Ensifer meliloti), this protein is Glycerol kinase.